Consider the following 237-residue polypeptide: MPINPLYLFPNLFTASSIFLGMMSIFYASSYQFVMACWLVVASLILDGLDGRVARLTNTTSKFGIEFDSLADVIAFGVAPSLIAYFYVGYNFGRIGMAVSALFVIFGAIRLARFNISTNTSDPYSFIGIPIPAAAVLVVLCVLLDNKYHFLEGNTEKLFLSFIVLLGVLMVSNIRYPNFKKVKWNLKLFILVLIFLSLVFVRPLEALSVFMGLYLIYGIIRWLFLMVKIIFNKNKSA.

A run of 8 helical transmembrane segments spans residues 3 to 23, 25 to 45, 73 to 93, 95 to 115, 124 to 144, 150 to 170, 184 to 204, and 207 to 227; these read INPL…LGMM, IFYA…ASLI, VIAF…YNFG, IGMA…ARFN, YSFI…CVLL, FLEG…GVLM, WNLK…VRPL, and LSVF…FLMV.

This sequence belongs to the CDP-alcohol phosphatidyltransferase class-I family.

It localises to the cell membrane. The catalysed reaction is a CDP-1,2-diacyl-sn-glycerol + L-serine = a 1,2-diacyl-sn-glycero-3-phospho-L-serine + CMP + H(+). This Helicobacter pylori (strain ATCC 700392 / 26695) (Campylobacter pylori) protein is CDP-diacylglycerol--serine O-phosphatidyltransferase (pssA).